Reading from the N-terminus, the 287-residue chain is Putative ankyrin repeat protein R791 (287 aa).

7 ANK repeats span residues 40–71, 76–105, 107–134, 135–164, 165–194, 196–224, and 225–254; these read HNFN…PLVF, NVHD…NIET, NDDV…IDNK, TIFE…DIKA, KDNF…TIDI, DDTY…DYRT, and VDDL…DIEA.

This chain is Putative ankyrin repeat protein R791, found in Acanthamoeba polyphaga (Amoeba).